The following is a 230-amino-acid chain: Protein-L-isoaspartate O-methyltransferase 1 (230 aa).

S65 is a catalytic residue.

This sequence belongs to the methyltransferase superfamily. L-isoaspartyl/D-aspartyl protein methyltransferase family. As to quaternary structure, monomer. In terms of tissue distribution, expressed in roots, rosette leaves, stems, cauline leaves, flowers and developing seeds.

It localises to the cytoplasm. It catalyses the reaction [protein]-L-isoaspartate + S-adenosyl-L-methionine = [protein]-L-isoaspartate alpha-methyl ester + S-adenosyl-L-homocysteine. In terms of biological role, catalyzes the methyl esterification of L-isoaspartyl residues in peptides and proteins that result from spontaneous decomposition of normal L-aspartyl and L-asparaginyl residues. It plays a role in the repair and/or degradation of damaged proteins. Contributes to seed longevity and germination vigor by limiting the abnormal accumulation of the L-isoaspartyl residues in seed proteins. This chain is Protein-L-isoaspartate O-methyltransferase 1 (PIMT1), found in Arabidopsis thaliana (Mouse-ear cress).